The chain runs to 151 residues: uncharacterized protein (151 aa).

Positions Met1 to Ala48 are disordered.

This is an uncharacterized protein from Homo sapiens (Human).